The primary structure comprises 292 residues: Protein/nucleic acid deglycase HchA (292 aa).

A compositionally biased stretch (polar residues) spans 1–12; that stretch reads MSQDVNELSKQP. The tract at residues 1–23 is disordered; sequence MSQDVNELSKQPTPDKAEDNAFF. The active-site Nucleophile is the Cys-190.

Belongs to the peptidase C56 family. HchA subfamily.

Its subcellular location is the cytoplasm. The enzyme catalyses N(omega)-(1-hydroxy-2-oxopropyl)-L-arginyl-[protein] + H2O = lactate + L-arginyl-[protein] + H(+). It catalyses the reaction N(6)-(1-hydroxy-2-oxopropyl)-L-lysyl-[protein] + H2O = lactate + L-lysyl-[protein] + H(+). It carries out the reaction S-(1-hydroxy-2-oxopropyl)-L-cysteinyl-[protein] + H2O = lactate + L-cysteinyl-[protein] + H(+). The catalysed reaction is N(omega)-(1-hydroxy-2-oxoethyl)-L-arginyl-[protein] + H2O = L-arginyl-[protein] + glycolate + H(+). The enzyme catalyses N(6)-(1-hydroxy-2-oxoethyl)-L-lysyl-[protein] + H2O = glycolate + L-lysyl-[protein] + H(+). It catalyses the reaction S-(1-hydroxy-2-oxoethyl)-L-cysteinyl-[protein] + H2O = glycolate + L-cysteinyl-[protein] + H(+). It carries out the reaction N(2)-(1-hydroxy-2-oxopropyl)-dGTP + H2O = lactate + dGTP + H(+). The catalysed reaction is N(2)-(1-hydroxy-2-oxopropyl)-GTP + H2O = lactate + GTP + H(+). The enzyme catalyses N(2)-(1-hydroxy-2-oxopropyl)-GDP + H2O = lactate + GDP + H(+). It catalyses the reaction N(2)-(1-hydroxy-2-oxopropyl)-GMP + H2O = lactate + GMP + H(+). It carries out the reaction N(2)-(1-hydroxy-2-oxoethyl)-dGTP + H2O = dGTP + glycolate + H(+). The catalysed reaction is N(2)-(1-hydroxy-2-oxoethyl)-GTP + H2O = glycolate + GTP + H(+). The enzyme catalyses N(2)-(1-hydroxy-2-oxoethyl)-GDP + H2O = glycolate + GDP + H(+). It catalyses the reaction N(2)-(1-hydroxy-2-oxoethyl)-GMP + H2O = glycolate + GMP + H(+). It carries out the reaction an N(2)-(1-hydroxy-2-oxopropyl)-guanosine in RNA + H2O = a guanosine in RNA + lactate + H(+). The catalysed reaction is an N(2)-(1-hydroxy-2-oxopropyl)-2'-deoxyguanosine in DNA + H2O = a 2'-deoxyguanosine in DNA + lactate + H(+). The enzyme catalyses an N(2)-(1-hydroxy-2-oxoethyl)-guanosine in RNA + H2O = a guanosine in RNA + glycolate + H(+). It catalyses the reaction an N(2)-(1-hydroxy-2-oxoethyl)-2'-deoxyguanosine in DNA + H2O = a 2'-deoxyguanosine in DNA + glycolate + H(+). Its function is as follows. Protein and nucleotide deglycase that catalyzes the deglycation of the Maillard adducts formed between amino groups of proteins or nucleotides and reactive carbonyl groups of glyoxals. Thus, functions as a protein deglycase that repairs methylglyoxal- and glyoxal-glycated proteins, and releases repaired proteins and lactate or glycolate, respectively. Deglycates cysteine, arginine and lysine residues in proteins, and thus reactivates these proteins by reversing glycation by glyoxals. Acts on early glycation intermediates (hemithioacetals and aminocarbinols), preventing the formation of Schiff bases and advanced glycation endproducts (AGE). Also functions as a nucleotide deglycase able to repair glycated guanine in the free nucleotide pool (GTP, GDP, GMP, dGTP) and in DNA and RNA. Is thus involved in a major nucleotide repair system named guanine glycation repair (GG repair), dedicated to reversing methylglyoxal and glyoxal damage via nucleotide sanitization and direct nucleic acid repair. Plays an important role in protecting cells from carbonyl stress. The polypeptide is Protein/nucleic acid deglycase HchA (Staphylococcus aureus (strain bovine RF122 / ET3-1)).